The primary structure comprises 513 residues: GMP synthase [glutamine-hydrolyzing] (513 aa).

One can recognise a Glutamine amidotransferase type-1 domain in the interval 3–200; that stretch reads SVTVLDFGSQ…LIDIAGIKPD (198 aa). Catalysis depends on Cys-80, which acts as the Nucleophile. Residues His-174 and Glu-176 contribute to the active site. A GMPS ATP-PPase domain is found at 201 to 388; it reads WSPKSFIGHQ…LGIAEDILMR (188 aa). 228–234 is an ATP binding site; that stretch reads SGGVDST.

Homodimer.

The catalysed reaction is XMP + L-glutamine + ATP + H2O = GMP + L-glutamate + AMP + diphosphate + 2 H(+). Its pathway is purine metabolism; GMP biosynthesis; GMP from XMP (L-Gln route): step 1/1. Catalyzes the synthesis of GMP from XMP. This chain is GMP synthase [glutamine-hydrolyzing], found in Chlorobium phaeobacteroides (strain DSM 266 / SMG 266 / 2430).